The sequence spans 639 residues: Protein phosphatase EYA4 (639 aa).

M1 carries the N-acetylmethionine modification. Disordered stretches follow at residues M1–N72, Q210–G232, and A300–L368. K14 participates in a covalent cross-link: Glycyl lysine isopeptide (Lys-Gly) (interchain with G-Cter in SUMO2). Residues E18–M30 show a composition bias toward polar residues. K52 is covalently cross-linked (Glycyl lysine isopeptide (Lys-Gly) (interchain with G-Cter in SUMO2)). Residues S56 to N66 show a composition bias toward low complexity. Polar residues predominate over residues A300–T334. A Phosphoserine modification is found at S361. Catalysis depends on D375, which acts as the Nucleophile. 3 residues coordinate Mg(2+): D375, D377, and D603. D377 (proton donor) is an active-site residue.

This sequence belongs to the HAD-like hydrolase superfamily. EYA family. Interacts with SIX3; translocates EYA4 from the cytoplasm to the nucleus and promotes activation of their target genes. Mg(2+) serves as cofactor. As to expression, highly expressed in heart and skeletal muscle.

The protein localises to the cytoplasm. It localises to the nucleus. It catalyses the reaction O-phospho-L-tyrosyl-[protein] + H2O = L-tyrosyl-[protein] + phosphate. In terms of biological role, tyrosine phosphatase that specifically dephosphorylates 'Tyr-142' of histone H2AX (H2AXY142ph). 'Tyr-142' phosphorylation of histone H2AX plays a central role in DNA repair and acts as a mark that distinguishes between apoptotic and repair responses to genotoxic stress. Promotes efficient DNA repair by dephosphorylating H2AX, promoting the recruitment of DNA repair complexes containing MDC1. Its function as histone phosphatase probably explains its role in transcription regulation during organogenesis. May be involved in development of the eye. The chain is Protein phosphatase EYA4 (EYA4) from Homo sapiens (Human).